Reading from the N-terminus, the 353-residue chain is tRNA-specific 2-thiouridylase MnmA (353 aa).

ATP is bound by residues Gly7–Ser14 and Leu33. The active-site Nucleophile is the Cys94. A disulfide bridge links Cys94 with Cys193. An ATP-binding site is contributed by Gly119. An interaction with tRNA region spans residues Lys143–Gln145. Cys193 acts as the Cysteine persulfide intermediate in catalysis. The segment at Arg298–Tyr299 is interaction with tRNA.

It belongs to the MnmA/TRMU family.

It is found in the cytoplasm. The enzyme catalyses S-sulfanyl-L-cysteinyl-[protein] + uridine(34) in tRNA + AH2 + ATP = 2-thiouridine(34) in tRNA + L-cysteinyl-[protein] + A + AMP + diphosphate + H(+). Catalyzes the 2-thiolation of uridine at the wobble position (U34) of tRNA, leading to the formation of s(2)U34. This is tRNA-specific 2-thiouridylase MnmA from Picosynechococcus sp. (strain ATCC 27264 / PCC 7002 / PR-6) (Agmenellum quadruplicatum).